Reading from the N-terminus, the 632-residue chain is tRNA uridine 5-carboxymethylaminomethyl modification enzyme MnmG (632 aa).

FAD is bound by residues 15 to 20 (GAGHAG), Ile127, and Ser182. 276 to 290 (GPRYCPSIEDKIVRF) is a binding site for NAD(+). Gln373 is a binding site for FAD.

Belongs to the MnmG family. As to quaternary structure, homodimer. Heterotetramer of two MnmE and two MnmG subunits. The cofactor is FAD.

The protein localises to the cytoplasm. In terms of biological role, NAD-binding protein involved in the addition of a carboxymethylaminomethyl (cmnm) group at the wobble position (U34) of certain tRNAs, forming tRNA-cmnm(5)s(2)U34. This is tRNA uridine 5-carboxymethylaminomethyl modification enzyme MnmG from Streptococcus pyogenes serotype M18 (strain MGAS8232).